Reading from the N-terminus, the 533-residue chain is CTP synthase (533 aa).

The segment at 1 to 268 (MGETKYIFVT…DETILQKMGL (268 aa)) is amidoligase domain. Ser15 contacts CTP. Ser15 is a binding site for UTP. 16-21 (SLGKGI) lines the ATP pocket. Position 56 (Tyr56) interacts with L-glutamine. Asp73 contributes to the ATP binding site. Mg(2+)-binding residues include Asp73 and Glu143. Residues 150–152 (DIE), 189–194 (KTKPTQ), and Lys225 contribute to the CTP site. Residues 189-194 (KTKPTQ) and Lys225 each bind UTP. The 233-residue stretch at 301–533 (YVELQDAYKS…VSFIKAAIDK (233 aa)) folds into the Glutamine amidotransferase type-1 domain. Residue Gly356 coordinates L-glutamine. The active-site Nucleophile; for glutamine hydrolysis is Cys383. L-glutamine contacts are provided by residues 384–387 (LGMQ), Glu407, and Arg464. Catalysis depends on residues His509 and Glu511.

It belongs to the CTP synthase family. Homotetramer.

It catalyses the reaction UTP + L-glutamine + ATP + H2O = CTP + L-glutamate + ADP + phosphate + 2 H(+). It carries out the reaction L-glutamine + H2O = L-glutamate + NH4(+). The enzyme catalyses UTP + NH4(+) + ATP = CTP + ADP + phosphate + 2 H(+). It functions in the pathway pyrimidine metabolism; CTP biosynthesis via de novo pathway; CTP from UDP: step 2/2. Its activity is regulated as follows. Allosterically activated by GTP, when glutamine is the substrate; GTP has no effect on the reaction when ammonia is the substrate. The allosteric effector GTP functions by stabilizing the protein conformation that binds the tetrahedral intermediate(s) formed during glutamine hydrolysis. Inhibited by the product CTP, via allosteric rather than competitive inhibition. Catalyzes the ATP-dependent amination of UTP to CTP with either L-glutamine or ammonia as the source of nitrogen. Regulates intracellular CTP levels through interactions with the four ribonucleotide triphosphates. The protein is CTP synthase of Bacteroides fragilis (strain YCH46).